Here is a 436-residue protein sequence, read N- to C-terminus: tRNA-2-methylthio-N(6)-dimethylallyladenosine synthase (436 aa).

An MTTase N-terminal domain is found at 5-121 (RKLFIKTYGC…LPDMLDRTEG (117 aa)). Cys14, Cys50, Cys84, Cys158, Cys162, and Cys165 together coordinate [4Fe-4S] cluster. Positions 144–374 (ATRGPAAFLT…TEQQRAAQMA (231 aa)) constitute a Radical SAM core domain. A TRAM domain is found at 373 to 435 (MAMVGREVGV…PNSLAGERLG (63 aa)).

Belongs to the methylthiotransferase family. MiaB subfamily. Monomer. Requires [4Fe-4S] cluster as cofactor.

Its subcellular location is the cytoplasm. It carries out the reaction N(6)-dimethylallyladenosine(37) in tRNA + (sulfur carrier)-SH + AH2 + 2 S-adenosyl-L-methionine = 2-methylsulfanyl-N(6)-dimethylallyladenosine(37) in tRNA + (sulfur carrier)-H + 5'-deoxyadenosine + L-methionine + A + S-adenosyl-L-homocysteine + 2 H(+). Functionally, catalyzes the methylthiolation of N6-(dimethylallyl)adenosine (i(6)A), leading to the formation of 2-methylthio-N6-(dimethylallyl)adenosine (ms(2)i(6)A) at position 37 in tRNAs that read codons beginning with uridine. This chain is tRNA-2-methylthio-N(6)-dimethylallyladenosine synthase, found in Cereibacter sphaeroides (strain ATCC 17029 / ATH 2.4.9) (Rhodobacter sphaeroides).